Reading from the N-terminus, the 1927-residue chain is Immunoglobulin A1 protease (1927 aa).

A signal peptide spans 1–42 (MEKYFGEKQERFSFRKLSVGLVSATISSLFFMSVLASSSVDA). Residues 43–99 (QETAGVHYKYVADSELSSEEKKQLVYDIPTYVENDDETYYLVYKLNSQNQLAELPNT) constitute a propeptide that is removed on maturation. The LPXTG sorting signal motif lies at 96–100 (LPNTG). T99 bears the Pentaglycyl murein peptidoglycan amidated threonine mark. Helical transmembrane passes span 106 to 125 (QALV…FAVS) and 132 to 154 (KTVL…VHAL). Residues 155–1927 (ENHLLLNYNT…FRRSIFENKK (1773 aa)) are Extracellular-facing. Positions 235-246 (QEQTPVSSTKPT) are enriched in polar residues. Disordered regions lie at residues 235–305 (QEQT…NPQD), 371–394 (SREI…TKKT), and 426–640 (EAVV…PEKT). Over residues 276–296 (LAEHKNLETKKEEKISPKEKT) the composition is skewed to basic and acidic residues. Positions 314–393 (KPELLYREET…PRIVEKGTKK (80 aa)) constitute a G5 domain. 3 consecutive repeat copies span residues 419-435 (AIQP…KGEP), 436-452 (EVQP…KGEP), and 453-469 (AVQP…KGEP). A 3 X 17 AA approximate tandem repeats region spans residues 419–469 (AIQPELPEAVVSDKGEPEVQPTLPEAVVTDKGEPAVQPELPEAVVSDKGEP). The span at 485-511 (VKPETPVEKTKEQGPEKTEEVPVKPTE) shows a compositional bias: basic and acidic residues. Polar residues-rich tracts occupy residues 516–529 (NPNE…SIQG), 538–559 (EDTQ…SNKP), and 568–606 (ESNQ…STED). Residues 609-619 (TKSNTSNSNGN) are compositionally biased toward low complexity. Residues 620-640 (EEIKQENELDPDKKVEDPEKT) are compositionally biased toward basic and acidic residues. H1565 provides a ligand contact to Zn(2+). E1566 is a catalytic residue. Zn(2+) contacts are provided by H1569 and E1589.

This sequence belongs to the peptidase M26 family. Zn(2+) serves as cofactor. Post-translationally, the Gram-positive cell-wall anchor motif LPXTG is located in the N-terminal part, in contrast to such motifs in other known streptococcal and staphylococcal proteins. The protease could be cleaved by the sortase and anchored in the membrane via the two potential N-terminal transmembrane domains, whereas the propeptide located prior to the LPXTG motif would remain attached to the cell wall peptidoglycan by an amide bond.

It is found in the secreted. The protein localises to the cell wall. Its subcellular location is the membrane. The catalysed reaction is Cleavage of Pro-|-Thr bond in the hinge region of the heavy chain of human IgA.. In terms of biological role, zinc metalloproteinase which cleaves human immunoglobulin A1 (IgA1) in the hinge region, rendering it less efficient in coating the surface of colonizing or invading pneumococci. May be responsible for pneumococcal infection and is potentially involved in distinct stages of pneumococcal disease. This chain is Immunoglobulin A1 protease (iga), found in Streptococcus pneumoniae.